The following is a 172-amino-acid chain: MAKMQAKVQADERDDGLREKMISVNRVTKVVKGGRILGFAALTVVGDGDGRVGMGKGKAKEVPVAVQKAMEQARRNMFKVPLKNGTLQHEVHGKHGASMVLLAPAKDGTGVIAGGPMRAVFDVMGVQNVVAKSHGSTNPYNLVRATLDGLRKQSTPGDIAAKRGKSVEDILG.

The S5 DRBM domain maps to 17–80 (LREKMISVNR…EQARRNMFKV (64 aa)).

It belongs to the universal ribosomal protein uS5 family. In terms of assembly, part of the 30S ribosomal subunit. Contacts proteins S4 and S8.

Functionally, with S4 and S12 plays an important role in translational accuracy. In terms of biological role, located at the back of the 30S subunit body where it stabilizes the conformation of the head with respect to the body. The chain is Small ribosomal subunit protein uS5 from Paraburkholderia phytofirmans (strain DSM 17436 / LMG 22146 / PsJN) (Burkholderia phytofirmans).